A 117-amino-acid polypeptide reads, in one-letter code: MAKYSSKINKIRTFALSLVFVGFIIMYIGLFFKQSVLLASLFMILGLLSIGLSTAVYFWIGMLSTKAVRVMCPACEKETKILGRVDMCMHCREPLTLDKGLEGKAFDESYNRKNSVK.

Transmembrane regions (helical) follow at residues 13-33 (TFAL…LFFK) and 41-61 (LFMI…FWIG).

This sequence belongs to the UPF0295 family.

The protein resides in the cell membrane. This chain is UPF0295 protein RBAM_008830, found in Bacillus velezensis (strain DSM 23117 / BGSC 10A6 / LMG 26770 / FZB42) (Bacillus amyloliquefaciens subsp. plantarum).